We begin with the raw amino-acid sequence, 180 residues long: ATP-dependent protease subunit HslV (180 aa).

Thr-2 is a catalytic residue. 3 residues coordinate Na(+): Gly-157, Cys-160, and Ser-163.

This sequence belongs to the peptidase T1B family. HslV subfamily. In terms of assembly, a double ring-shaped homohexamer of HslV is capped on each side by a ring-shaped HslU homohexamer. The assembly of the HslU/HslV complex is dependent on binding of ATP.

The protein localises to the cytoplasm. The catalysed reaction is ATP-dependent cleavage of peptide bonds with broad specificity.. Allosterically activated by HslU binding. Protease subunit of a proteasome-like degradation complex believed to be a general protein degrading machinery. The sequence is that of ATP-dependent protease subunit HslV from Wigglesworthia glossinidia brevipalpis.